The following is a 316-amino-acid chain: Thymidylate synthase (316 aa).

Residues Arg23 and 178–179 each bind dUMP; that span reads RR. The active-site Nucleophile is Cys198. DUMP-binding positions include 218–221, Asn229, and 259–261; these read RSAD and HLY. Asp221 serves as a coordination point for (6R)-5,10-methylene-5,6,7,8-tetrahydrofolate. (6R)-5,10-methylene-5,6,7,8-tetrahydrofolate is bound at residue Ala315.

It belongs to the thymidylate synthase family. Bacterial-type ThyA subfamily. As to quaternary structure, homodimer.

It localises to the cytoplasm. It catalyses the reaction dUMP + (6R)-5,10-methylene-5,6,7,8-tetrahydrofolate = 7,8-dihydrofolate + dTMP. The protein operates within pyrimidine metabolism; dTTP biosynthesis. Its function is as follows. Catalyzes the reductive methylation of 2'-deoxyuridine-5'-monophosphate (dUMP) to 2'-deoxythymidine-5'-monophosphate (dTMP) while utilizing 5,10-methylenetetrahydrofolate (mTHF) as the methyl donor and reductant in the reaction, yielding dihydrofolate (DHF) as a by-product. This enzymatic reaction provides an intracellular de novo source of dTMP, an essential precursor for DNA biosynthesis. This chain is Thymidylate synthase, found in Lacticaseibacillus casei (Lactobacillus casei).